The sequence spans 314 residues: ATP synthase gamma chain (314 aa).

This sequence belongs to the ATPase gamma chain family. In terms of assembly, F-type ATPases have 2 components, CF(1) - the catalytic core - and CF(0) - the membrane proton channel. CF(1) has five subunits: alpha(3), beta(3), gamma(1), delta(1), epsilon(1). CF(0) has three main subunits: a, b and c.

The protein localises to the cell membrane. Its function is as follows. Produces ATP from ADP in the presence of a proton gradient across the membrane. The gamma chain is believed to be important in regulating ATPase activity and the flow of protons through the CF(0) complex. This chain is ATP synthase gamma chain, found in Cutibacterium acnes (strain DSM 16379 / KPA171202) (Propionibacterium acnes).